Reading from the N-terminus, the 326-residue chain is Lipoyl synthase (326 aa).

Cysteine 74, cysteine 79, cysteine 85, cysteine 100, cysteine 104, cysteine 107, and serine 314 together coordinate [4Fe-4S] cluster. The region spanning cysteine 85–threonine 303 is the Radical SAM core domain.

It belongs to the radical SAM superfamily. Lipoyl synthase family. [4Fe-4S] cluster serves as cofactor.

The protein localises to the cytoplasm. The enzyme catalyses [[Fe-S] cluster scaffold protein carrying a second [4Fe-4S](2+) cluster] + N(6)-octanoyl-L-lysyl-[protein] + 2 oxidized [2Fe-2S]-[ferredoxin] + 2 S-adenosyl-L-methionine + 4 H(+) = [[Fe-S] cluster scaffold protein] + N(6)-[(R)-dihydrolipoyl]-L-lysyl-[protein] + 4 Fe(3+) + 2 hydrogen sulfide + 2 5'-deoxyadenosine + 2 L-methionine + 2 reduced [2Fe-2S]-[ferredoxin]. Its pathway is protein modification; protein lipoylation via endogenous pathway; protein N(6)-(lipoyl)lysine from octanoyl-[acyl-carrier-protein]: step 2/2. Functionally, catalyzes the radical-mediated insertion of two sulfur atoms into the C-6 and C-8 positions of the octanoyl moiety bound to the lipoyl domains of lipoate-dependent enzymes, thereby converting the octanoylated domains into lipoylated derivatives. The chain is Lipoyl synthase from Delftia acidovorans (strain DSM 14801 / SPH-1).